Here is a 1018-residue protein sequence, read N- to C-terminus: Contactin-1 (1018 aa).

A signal peptide spans 1–20; that stretch reads MKMWLLFSLLVIISFKTCLS. 6 Ig-like C2-type domains span residues 41–131, 137–223, 241–326, 331–407, 413–500, and 504–601; these read PIFE…ATLS, PFPP…KSVF, PADI…ARIY, PEWV…AELK, PTFE…GTLV, and PTRI…LVVR. 2 disulfides stabilise this stretch: C65-C114 and C158-C211. Residues N208 and N258 are each glycosylated (N-linked (GlcNAc...) asparagine). Residues C263 and C310 are joined by a disulfide bond. N338 carries an N-linked (GlcNAc...) asparagine glycan. 2 disulfide bridges follow: C352-C391 and C436-C484. N-linked (GlcNAc...) asparagine glycans are attached at residues N457, N473, N494, and N521. A disulfide bridge links C526 with C583. An N-linked (GlcNAc...) asparagine glycan is attached at N591. 4 Fibronectin type-III domains span residues 606–704, 709–806, 811–906, and 907–1000; these read PPGG…TDGA, APSD…SAQD, APTA…APPS, and QPPR…ILSP. Disordered stretches follow at residues 698-718 and 891-910; these read KIKT…GGGG and PPSD…QPPR. The GPI-anchor amidated serine moiety is linked to residue S999. The propeptide at 1000–1018 is removed in mature form; that stretch reads PCLLGFLLPALGILVYLEF.

This sequence belongs to the immunoglobulin superfamily. Contactin family. In terms of assembly, monomer. Interacts with CNTNAP1 in cis form. Binds to the carbonic-anhydrase like domain of PTPRZ1. Interacts with NOTCH1 and TNR. Detected in a complex with NRCAM and PTPRB. Interacts with TASOR.

The protein localises to the cell membrane. Contactins mediate cell surface interactions during nervous system development. Involved in the formation of paranodal axo-glial junctions in myelinated peripheral nerves and in the signaling between axons and myelinating glial cells via its association with CNTNAP1. Participates in oligodendrocytes generation by acting as a ligand of NOTCH1. Its association with NOTCH1 promotes NOTCH1 activation through the released notch intracellular domain (NICD) and subsequent translocation to the nucleus. Interaction with TNR induces a repulsion of neurons and an inhibition of neurite outgrowth. This Bos taurus (Bovine) protein is Contactin-1 (CNTN1).